A 508-amino-acid chain; its full sequence is Lysine--tRNA ligase (508 aa).

E416 and E423 together coordinate Mg(2+).

Belongs to the class-II aminoacyl-tRNA synthetase family. In terms of assembly, homodimer. Requires Mg(2+) as cofactor.

It localises to the cytoplasm. It catalyses the reaction tRNA(Lys) + L-lysine + ATP = L-lysyl-tRNA(Lys) + AMP + diphosphate. The protein is Lysine--tRNA ligase of Prochlorococcus marinus (strain MIT 9303).